The primary structure comprises 243 residues: Venom nerve growth factor 5 (243 aa).

Residues M1 to A18 form the signal peptide. Residues A19–R125 constitute a propeptide that is removed on maturation. Positions G47–D66 are enriched in basic and acidic residues. The interval G47–Q67 is disordered. 3 disulfides stabilise this stretch: C139/C204, C182/C232, and C192/C234. N148 is a glycosylation site (N-linked (GlcNAc...) asparagine).

Belongs to the NGF-beta family. In terms of assembly, homodimer; non-covalently linked. As to expression, expressed by the venom gland.

Its subcellular location is the secreted. Nerve growth factor is important for the development and maintenance of the sympathetic and sensory nervous systems. It stimulates division and differentiation of sympathetic and embryonic sensory neurons as well as basal forebrain cholinergic neurons in the brain. Its relevance in the snake venom is not clear. However, it has been shown to inhibit metalloproteinase-dependent proteolysis of platelet glycoprotein Ib alpha, suggesting a metalloproteinase inhibition to prevent metalloprotease autodigestion and/or protection against prey proteases. Binds a lipid between the two protein chains in the homodimer. The lipid-bound form promotes histamine relase from mouse mast cells, contrary to the lipid-free form. The chain is Venom nerve growth factor 5 from Tropidechis carinatus (Australian rough-scaled snake).